A 275-amino-acid polypeptide reads, in one-letter code: MLLHFSKMHGLGNDFMVVDNVTQNLYVNPDQIRRWADRHTGIGFDQMLLVEPPYDPDLDFHYRIFNADGSEVAQCGNGARCFAKFVKAKNLSNKNHLKVSTKAGKMVLHLEKDGQVTVDMGEPLFEPAAVPFKAQKAEQTYVLRVKEETVLCGVLGLGNPHCVIAVDNVDTTPVETLGAALAAHERFPESVNVGFMQKVSADEIKLRVFERGVGETRACGSGACAAAVAGIQQGLLNERVKVSLPGGDLIIRWQQGQPVKMTGPAELVYDGQMVL.

Residues Asn-13, Gln-46, and Asn-66 each coordinate substrate. The active-site Proton donor is Cys-75. Residues 76–77 (GN), Asn-159, Asn-192, and 210–211 (ER) each bind substrate. The active-site Proton acceptor is the Cys-219. 220-221 (GS) provides a ligand contact to substrate.

This sequence belongs to the diaminopimelate epimerase family. As to quaternary structure, homodimer.

It is found in the cytoplasm. It carries out the reaction (2S,6S)-2,6-diaminopimelate = meso-2,6-diaminopimelate. Its pathway is amino-acid biosynthesis; L-lysine biosynthesis via DAP pathway; DL-2,6-diaminopimelate from LL-2,6-diaminopimelate: step 1/1. Its function is as follows. Catalyzes the stereoinversion of LL-2,6-diaminopimelate (L,L-DAP) to meso-diaminopimelate (meso-DAP), a precursor of L-lysine and an essential component of the bacterial peptidoglycan. This is Diaminopimelate epimerase from Idiomarina loihiensis (strain ATCC BAA-735 / DSM 15497 / L2-TR).